Reading from the N-terminus, the 466-residue chain is Soluble pyridine nucleotide transhydrogenase (466 aa).

36-45 (EKESSVGGGC) provides a ligand contact to FAD.

It belongs to the class-I pyridine nucleotide-disulfide oxidoreductase family. FAD serves as cofactor.

Its subcellular location is the cytoplasm. The enzyme catalyses NAD(+) + NADPH = NADH + NADP(+). In terms of biological role, conversion of NADPH, generated by peripheral catabolic pathways, to NADH, which can enter the respiratory chain for energy generation. This Vibrio vulnificus (strain CMCP6) protein is Soluble pyridine nucleotide transhydrogenase.